The sequence spans 313 residues: Ubiquitin-conjugating enzyme E2 Z (313 aa).

Residues 58 to 212 (QCVLRIKRDI…IRHETIRVAV (155 aa)) enclose the UBC core domain. The active-site Glycyl thioester intermediate is cysteine 147. The interval 283-313 (VREKHRKETVDIDSDSSSSETETDTQGSSNP) is disordered. Residues 297–313 (DSSSSETETDTQGSSNP) show a composition bias toward low complexity.

The protein belongs to the ubiquitin-conjugating enzyme family.

The protein resides in the cytoplasm. Its subcellular location is the nucleus. It carries out the reaction S-ubiquitinyl-[E1 ubiquitin-activating enzyme]-L-cysteine + [E2 ubiquitin-conjugating enzyme]-L-cysteine = [E1 ubiquitin-activating enzyme]-L-cysteine + S-ubiquitinyl-[E2 ubiquitin-conjugating enzyme]-L-cysteine.. Its pathway is protein modification; protein ubiquitination. Its function is as follows. Catalyzes the covalent attachment of ubiquitin to other proteins. May be involved in apoptosis regulation. The protein is Ubiquitin-conjugating enzyme E2 Z (ube2z) of Xenopus tropicalis (Western clawed frog).